The sequence spans 726 residues: Delta-1-pyrroline-5-carboxylate synthase B (726 aa).

The segment at M1–R296 is glutamate 5-kinase. Substrate is bound by residues S60, D157, and N176. ATP contacts are provided by residues S196–D197 and R236–K242. The gamma-glutamyl phosphate reductase stretch occupies residues D297–Q717.

The protein in the N-terminal section; belongs to the glutamate 5-kinase family. It in the C-terminal section; belongs to the gamma-glutamyl phosphate reductase family.

The enzyme catalyses L-glutamate + ATP = L-glutamyl 5-phosphate + ADP. It carries out the reaction L-glutamate 5-semialdehyde + phosphate + NADP(+) = L-glutamyl 5-phosphate + NADPH + H(+). It functions in the pathway amino-acid biosynthesis; L-proline biosynthesis; L-glutamate 5-semialdehyde from L-glutamate: step 1/2. Its pathway is amino-acid biosynthesis; L-proline biosynthesis; L-glutamate 5-semialdehyde from L-glutamate: step 2/2. P5CS plays a key role in proline biosynthesis, leading to osmoregulation in plants. This Arabidopsis thaliana (Mouse-ear cress) protein is Delta-1-pyrroline-5-carboxylate synthase B (P5CSB).